A 328-amino-acid chain; its full sequence is Carbonic anhydrase-related protein 10 (328 aa).

Positions 31 to 301 (GWWAYKEVVQ…LNNRCIRTNI (271 aa)) constitute an Alpha-carbonic anhydrase domain.

The protein belongs to the alpha-carbonic anhydrase family.

In terms of biological role, does not have a catalytic activity. The protein is Carbonic anhydrase-related protein 10 (CA10) of Bos taurus (Bovine).